A 384-amino-acid polypeptide reads, in one-letter code: Potassium channel subfamily K member 18 (384 aa).

Residues 1-23 (MEVSGHPQARRCCPEALGKLFPG) lie on the Cytoplasmic side of the membrane. The helical transmembrane segment at 24-44 (LCFLCFLVTYALVGAVVFSAI) threads the bilayer. An N-linked (GlcNAc...) asparagine glycan is attached at Asn-70. An intramembrane region (pore-forming) is located at residues 103–129 (FLSSLFFCCTVFSTVGYGYIYPVTRLG). K(+)-binding residues include Thr-116, Val-117, Gly-118, and Tyr-119. Residues 116 to 121 (TVGYGY) form a selectivity filter 1 region. The helical transmembrane segment at 130 to 148 (KYLCMLYALFGIPLMFLVL) threads the bilayer. At 149 to 280 (TDTGDILATI…EVGQQVERLD (132 aa)) the chain is on the cytoplasmic side. Residues 200 to 205 (PQIIIS) form an interaction with calcineurin region. The tract at residues 249–254 (RSNSCP) is interaction with YWHAH. Ser-252 and Ser-264 each carry phosphoserine. The helical transmembrane segment at 281–301 (IPLPIIALIVFAYISCAAAIL) threads the bilayer. The pore-forming intramembrane region spans 314–328 (FYFCFVTLTTIGFGD). Residues 323 to 328 (TIGFGD) form a selectivity filter 2 region. Residues 335-355 (NFFLFFSIYIIVGMEIVFIAF) traverse the membrane as a helical segment. Topologically, residues 356-384 (KLVQNRLIDIYKNVMLFFAKGKFYHLVKK) are cytoplasmic.

This sequence belongs to the two pore domain potassium channel (TC 1.A.1.8) family. As to quaternary structure, homodimer. Heterodimer with KCNK2. Heterodimer with KCNK10. Interacts with calcineurin. Interacts with YWHAH, in a phosphorylation-dependent manner. Post-translationally, N-glycosylated. In terms of processing, phosphorylation of Ser-264 is required for the binding of 14-3-3eta/YWHAH. Calcineurin-mediated dephosphorylation enhances channel activity. In terms of tissue distribution, expressed in dorsal root ganglion and trigeminal ganglion neurons. Detected at low levels in spinal cord. Expressed in regulatory T cells (at protein level).

The protein resides in the cell membrane. The enzyme catalyses K(+)(in) = K(+)(out). Activated by volatile anesthetics but inhibited by amide local anesthetics. Inhibited by Ba(2+) ions. Inhibited by free polyunsaturated fatty acids. Channel conductance is sensitive to intracellular pH, it decreases at acidic pH and increases at basic pH. In contrast to its mouse ortholog, it is not regulated by extracellular protons. Insensitive to changes in temperature. Functionally, k(+) channel that conducts outward and inward rectifying currents at depolarized and hyperpolarized membrane potentials, respectively. The outward rectifying currents are voltage-dependent, coupled to K(+) electrochemical gradient across the membrane, whereas the inward currents can be induced in response to activation of Ca(2+)-mobilizing receptors. Homo- and heterodimerizes to form functional channels with distinct regulatory and gating properties. In trigeminal ganglia sensory neurons, the heterodimers of KCNK18/TRESK and KCNK2/TREK-1 or KCNK10/TREK-2 inhibit neuronal firing and neurogenic inflammation by stabilizing the resting membrane potential at K(+) equilibrium potential as well as by regulating the threshold of action potentials and the spike frequency. In thymocytes, conducts K(+) currents upon T cell receptor (TCR) signaling leading to sustained Ca(2+) influx and NF-kappa-B activation, FOXP3 transcription and positive selection of regulatory T cell (Treg) progenitor subsets. Appears to mediate the analgesics effects of hydroxy-alpha-sanshool, a metabolite naturally present in Schezuan pepper and other Xanthoxylum plants. This is Potassium channel subfamily K member 18 from Homo sapiens (Human).